The chain runs to 306 residues: Agmatinase (306 aa).

Mn(2+) contacts are provided by H126, D149, H151, D153, D230, and D232.

This sequence belongs to the arginase family. Agmatinase subfamily. Mn(2+) serves as cofactor.

It carries out the reaction agmatine + H2O = urea + putrescine. The protein operates within amine and polyamine biosynthesis; putrescine biosynthesis via agmatine pathway; putrescine from agmatine: step 1/1. Catalyzes the formation of putrescine from agmatine. The chain is Agmatinase from Escherichia coli O9:H4 (strain HS).